We begin with the raw amino-acid sequence, 67 residues long: MKNVFKTLAVLLTLFSLTGCGLKGPLYFPPADKNAPPPTKKVDSQTQSTMPDKNDRATGDGPSQVNY.

Positions 1–19 (MKNVFKTLAVLLTLFSLTG) are cleaved as a signal peptide. Cysteine 20 is lipidated: N-palmitoyl cysteine. Cysteine 20 is lipidated: S-diacylglycerol cysteine. The interval 26-67 (LYFPPADKNAPPPTKKVDSQTQSTMPDKNDRATGDGPSQVNY) is disordered.

Belongs to the LptM family. In terms of assembly, interacts with the outer membrane embedded portion of the LPS translocon formed by LptD and LptE (LptDE).

It is found in the cell outer membrane. In terms of biological role, component of the lipopolysaccharide (LPS) transport (Lpt) pathway that promotes efficient assembly of the outer membrane LPS translocon (LptDE) by the BAM complex. Facilitates oxidative maturation of LptD by stabilizing a conformation of the LPS translocon in which LptD can efficiently acquire native disulfide bonds, thereby activating the LPS translocon. The chain is LPS-assembly lipoprotein LptM from Salmonella typhi.